A 297-amino-acid polypeptide reads, in one-letter code: 3-mercaptopyruvate sulfurtransferase (297 aa).

The residue at position 2 (Ala-2) is an N-acetylalanine. The Rhodanese 1 domain maps to 25 to 144; it reads ASQPLKLLDA…WLSQNLPISS (120 aa). Ser-35 carries the post-translational modification Phosphoserine. Lys-40 carries the N6-acetyllysine; alternate modification. Lys-40 carries the post-translational modification N6-succinyllysine; alternate. The interval 145-160 is hinge; that stretch reads GKSPSEPAEFCAQLDP. N6-succinyllysine occurs at positions 146 and 164. The Rhodanese 2 domain maps to 174–288; sequence DARRFQVVDA…WYMRAQPEHV (115 aa). Arg-188 is a substrate binding site. The active-site Cysteine persulfide intermediate is Cys-248.

In terms of assembly, monomer (active form). Homodimer; disulfide-linked (inactive form). In terms of processing, the N-terminus is blocked. In terms of tissue distribution, expressed in liver, heart, kidney and brain. Localizes to tubular epithelium in the kidney, pericentral hepatocytes in the liver, cardiac cells in the heart and neuroglial cells in the brain. Also expressed in vascular endothelium of the thoracic aorta. Weak expression in lung and thymus.

The protein resides in the cytoplasm. It localises to the mitochondrion. It is found in the synapse. The protein localises to the synaptosome. The catalysed reaction is 2-oxo-3-sulfanylpropanoate + [thioredoxin]-dithiol = [thioredoxin]-disulfide + hydrogen sulfide + pyruvate + H(+). With respect to regulation, by oxidative stress, and thioredoxin. Under oxidative stress conditions, the catalytic cysteine site is converted to a sulfenate which inhibits the MPST enzyme activity. Reduced thioredoxin cleaves an intersubunit disulfide bond to turn on the redox switch and reactivate the enzyme. Inhibited by different oxidants, hydrogen peroxide and tetrathionate. Functionally, transfer of a sulfur ion to cyanide or to other thiol compounds. Also has weak rhodanese activity. Detoxifies cyanide and is required for thiosulfate biosynthesis. Acts as an antioxidant. In combination with cysteine aminotransferase (CAT), contributes to the catabolism of cysteine and is an important producer of hydrogen sulfide in the brain, retina and vascular endothelial cells. Hydrogen sulfide H(2)S is an important synaptic modulator, signaling molecule, smooth muscle contractor and neuroprotectant. Its production by the 3MST/CAT pathway is regulated by calcium ions. This chain is 3-mercaptopyruvate sulfurtransferase (Mpst), found in Rattus norvegicus (Rat).